Here is a 468-residue protein sequence, read N- to C-terminus: Argininosuccinate lyase (468 aa).

The protein belongs to the lyase 1 family. Argininosuccinate lyase subfamily.

It localises to the cytoplasm. The enzyme catalyses 2-(N(omega)-L-arginino)succinate = fumarate + L-arginine. It functions in the pathway amino-acid biosynthesis; L-arginine biosynthesis; L-arginine from L-ornithine and carbamoyl phosphate: step 3/3. In Gloeobacter violaceus (strain ATCC 29082 / PCC 7421), this protein is Argininosuccinate lyase.